We begin with the raw amino-acid sequence, 249 residues long: CDP-diacylglycerol pyrophosphatase (249 aa).

A helical transmembrane segment spans residues 7-27; it reads FLLAVVIVAAVAGIGYWKLAA.

Belongs to the Cdh family.

Its subcellular location is the cell inner membrane. It catalyses the reaction a CDP-1,2-diacyl-sn-glycerol + H2O = a 1,2-diacyl-sn-glycero-3-phosphate + CMP + 2 H(+). Its pathway is phospholipid metabolism; CDP-diacylglycerol degradation; phosphatidate from CDP-diacylglycerol: step 1/1. The sequence is that of CDP-diacylglycerol pyrophosphatase from Citrobacter koseri (strain ATCC BAA-895 / CDC 4225-83 / SGSC4696).